Consider the following 799-residue polypeptide: Protein translocase subunit SecA (799 aa).

ATP-binding positions include Q85, 103-107, and D504; that span reads GEGKT.

Belongs to the SecA family. As to quaternary structure, monomer and homodimer. Part of the essential Sec protein translocation apparatus which comprises SecA, SecYEG and auxiliary proteins SecDF. Other proteins may also be involved.

The protein localises to the cell membrane. The protein resides in the cytoplasm. It catalyses the reaction ATP + H2O + cellular proteinSide 1 = ADP + phosphate + cellular proteinSide 2.. Its function is as follows. Part of the Sec protein translocase complex. Interacts with the SecYEG preprotein conducting channel. Has a central role in coupling the hydrolysis of ATP to the transfer of proteins into and across the cell membrane, serving as an ATP-driven molecular motor driving the stepwise translocation of polypeptide chains across the membrane. The polypeptide is Protein translocase subunit SecA (Lactobacillus gasseri (strain ATCC 33323 / DSM 20243 / BCRC 14619 / CIP 102991 / JCM 1131 / KCTC 3163 / NCIMB 11718 / NCTC 13722 / AM63)).